The chain runs to 992 residues: UPF0182 protein BCG_3215c (992 aa).

7 consecutive transmembrane segments (helical) span residues 18–38, 63–83, 113–133, 175–195, 210–230, 259–279, and 287–307; these read ILIMIALGVIVLLLAGPRLID, IVVCLVAGVVVGGIVFGGLAL, LVGIGIPAAIGLLAGIVAQSY, LVSVFLAFVANLVAHYIFGGI, VQLVSLVGVLVLLKAVAYWLD, KLILMAIALICAAAVFSAIAL, and IGLVLLLLSSLIVGAGWPLIV. Residues 906-938 form a disordered region; that stretch reads PTEAAVPPSPAANPPPPASGPQPPPVTAAPPVP. Residues 912 to 938 show a composition bias toward pro residues; the sequence is PPSPAANPPPPASGPQPPPVTAAPPVP.

The protein belongs to the UPF0182 family.

Its subcellular location is the cell membrane. In Mycobacterium bovis (strain BCG / Pasteur 1173P2), this protein is UPF0182 protein BCG_3215c.